A 101-amino-acid chain; its full sequence is Small ribosomal subunit protein uS10 (101 aa).

Belongs to the universal ribosomal protein uS10 family. In terms of assembly, part of the 30S ribosomal subunit.

In terms of biological role, involved in the binding of tRNA to the ribosomes. The chain is Small ribosomal subunit protein uS10 from Flavobacterium johnsoniae (strain ATCC 17061 / DSM 2064 / JCM 8514 / BCRC 14874 / CCUG 350202 / NBRC 14942 / NCIMB 11054 / UW101) (Cytophaga johnsonae).